Here is a 36-residue protein sequence, read N- to C-terminus: Serine protease inhibitor 2 (36 aa).

The Pacifastin domain occupies 1–36; that stretch reads EISCEPGTTFQDKCNTCRCGKDGKSAAGCTLKACPQ. 3 cysteine pairs are disulfide-bonded: cysteine 4–cysteine 19, cysteine 14–cysteine 34, and cysteine 17–cysteine 29.

It belongs to the protease inhibitor I19 family. As to expression, expressed in hemolymph.

It localises to the secreted. Its function is as follows. Probable serine protease inhibitor. This Melanoplus sanguinipes (Migratory grasshopper) protein is Serine protease inhibitor 2.